The following is a 61-amino-acid chain: Small ribosomal subunit protein uS14 (61 aa).

Zn(2+) is bound by residues cysteine 24, cysteine 27, cysteine 40, and cysteine 43.

Belongs to the universal ribosomal protein uS14 family. Zinc-binding uS14 subfamily. Part of the 30S ribosomal subunit. Contacts proteins S3 and S10. Zn(2+) serves as cofactor.

Functionally, binds 16S rRNA, required for the assembly of 30S particles and may also be responsible for determining the conformation of the 16S rRNA at the A site. The chain is Small ribosomal subunit protein uS14 from Streptococcus thermophilus (strain ATCC BAA-491 / LMD-9).